Here is a 155-residue protein sequence, read N- to C-terminus: MSSQKGNVTRSRPQKHQNTFTFKNDKFDKSVQTKKINAKLHDGVCQRCKEVLEWRVKYSKYKPLSKPKKCVKCLQKTVKDSYHIMCRPCACKLEVCAKCGKEEEIVIPFNKEPEPSENTESEGSNHRRSCKRKEDSDEDLDAESDSEGEDEDTQA.

Disordered stretches follow at residues 1-22 (MSSQKGNVTRSRPQKHQNTFTF) and 108-155 (PFNK…DTQA). The residue at position 2 (serine 2) is an N-acetylserine. Residues serine 136, serine 144, and serine 146 each carry the phosphoserine modification. Acidic residues predominate over residues 136 to 155 (SDEDLDAESDSEGEDEDTQA).

This is an uncharacterized protein from Rattus norvegicus (Rat).